A 455-amino-acid polypeptide reads, in one-letter code: uncharacterized protein (455 aa).

Helical transmembrane passes span 19–39 (FSLF…MFMG), 63–83 (ILNL…VIIS), 106–126 (FFIS…LLHM), 140–160 (FLQV…FSAI), 173–195 (VTIG…LFGF), 200–222 (VAGV…IVIV), 265–285 (MIVT…KVYT), 288–308 (ITMF…ILIG), 324–344 (MKSL…MTIF), 348–368 (LIGL…LIAM), 388–408 (AAGD…GIGL), and 410–430 (LAYL…ISFI).

It belongs to the multi antimicrobial extrusion (MATE) (TC 2.A.66.1) family.

The protein localises to the cell membrane. This is an uncharacterized protein from Bacillus subtilis (strain 168).